A 215-amino-acid polypeptide reads, in one-letter code: UPF0502 protein Ping_1905 (215 aa).

Belongs to the UPF0502 family.

This chain is UPF0502 protein Ping_1905, found in Psychromonas ingrahamii (strain DSM 17664 / CCUG 51855 / 37).